We begin with the raw amino-acid sequence, 53 residues long: Cytochrome c-552 (53 aa).

Residues Cys-19, Cys-22, His-23, and Met-44 each coordinate heme c.

In terms of processing, binds 1 heme c group covalently per subunit.

The protein localises to the cell membrane. The polypeptide is Cytochrome c-552 (Schinkia azotoformans (Bacillus azotoformans)).